A 396-amino-acid chain; its full sequence is MGKEKLILAYSGGLDTSVAIAWLKKDYDVIAVCMDVGEGKDLDFIHDKALTIGAIESYILDVKDEFAEHFVLPALQAHAMYEQKYPLVSALSRPIIAQKLVEMAHQTGATTIAHGCTGKGNDQVRFEVAIAALDPELKVIAPVREWKWHREEEITFAKANGVPIPADLDNPYSIDQNLWGRANECGVLENPWNQAPEEAFGITKSPEEAPDCAEYIDITFQNGKPIAINNQEMTLADLILSLNEIAGKHGIGRIDHVENRLVGIKSREIYECPAAMVLLAAHKEIEDLTLVREVSHFKPILENELSNLIYNALWFSPATKAIIAYVKETQKVVNGTTKVKLYKGSAKVVARHSSNSLYDENLATYTAADNFDQDAAVGFIKLWGLPTQVNAQVNKG.

9 to 17 (AYSGGLDTS) is a binding site for ATP. Position 85 (Tyr-85) interacts with L-citrulline. Gly-115 is an ATP binding site. Residues Thr-117, Asn-121, and Asp-122 each contribute to the L-aspartate site. Asn-121 is a binding site for L-citrulline. Arg-125, Ser-173, Glu-258, and Tyr-270 together coordinate L-citrulline.

It belongs to the argininosuccinate synthase family. Type 1 subfamily. As to quaternary structure, homotetramer.

It localises to the cytoplasm. It catalyses the reaction L-citrulline + L-aspartate + ATP = 2-(N(omega)-L-arginino)succinate + AMP + diphosphate + H(+). It functions in the pathway amino-acid biosynthesis; L-arginine biosynthesis; L-arginine from L-ornithine and carbamoyl phosphate: step 2/3. This is Argininosuccinate synthase from Streptococcus agalactiae serotype III (strain NEM316).